The sequence spans 151 residues: Small ribosomal subunit protein uS15 (151 aa).

Residues serine 21 and serine 32 each carry the phosphoserine modification.

This sequence belongs to the universal ribosomal protein uS15 family. As to quaternary structure, component of the small ribosomal subunit (SSU). Mature yeast ribosomes consist of a small (40S) and a large (60S) subunit. The 40S small subunit contains 1 molecule of ribosomal RNA (18S rRNA) and at least 33 different proteins. The large 60S subunit contains 3 rRNA molecules (25S, 5.8S and 5S rRNA) and at least 46 different proteins.

It localises to the cytoplasm. Component of the ribosome, a large ribonucleoprotein complex responsible for the synthesis of proteins in the cell. The small ribosomal subunit (SSU) binds messenger RNAs (mRNAs) and translates the encoded message by selecting cognate aminoacyl-transfer RNA (tRNA) molecules. The large subunit (LSU) contains the ribosomal catalytic site termed the peptidyl transferase center (PTC), which catalyzes the formation of peptide bonds, thereby polymerizing the amino acids delivered by tRNAs into a polypeptide chain. The nascent polypeptides leave the ribosome through a tunnel in the LSU and interact with protein factors that function in enzymatic processing, targeting, and the membrane insertion of nascent chains at the exit of the ribosomal tunnel. The protein is Small ribosomal subunit protein uS15 (rps13) of Schizosaccharomyces pombe (strain 972 / ATCC 24843) (Fission yeast).